The chain runs to 169 residues: Disulfide bond formation protein B (169 aa).

At 1-13 (MQALNHFSRIRLS) the chain is on the cytoplasmic side. Residues 14–30 (WFLLLLCIIFFEASALT) form a helical membrane-spanning segment. Residues 31–48 (FQHIMKLPPCVMCIYERV) lie on the Periplasmic side of the membrane. A disulfide bridge links C40 with C43. The helical transmembrane segment at 49–64 (AMMGIGGAAIIGLLNP) threads the bilayer. Residues 65–71 (NNLIIRW) lie on the Cytoplasmic side of the membrane. A helical transmembrane segment spans residues 72–89 (CGFIAWGISAGWGLKLAL). Residues 90–144 (EHVDFQLNPSPFSTCDLFVTFPSWAPLNKWAPWMFEAYGDCSKIVWQFLTLTMPQ) are Periplasmic-facing. Cysteines 104 and 130 form a disulfide. Residues 145–163 (WLVIIFAGNLIALAIFVIA) form a helical membrane-spanning segment. Topologically, residues 164–169 (QFFNKK) are cytoplasmic.

It belongs to the DsbB family.

Its subcellular location is the cell inner membrane. Its function is as follows. Required for disulfide bond formation in some periplasmic proteins. Acts by oxidizing the DsbA protein. This chain is Disulfide bond formation protein B, found in Aliivibrio fischeri (strain ATCC 700601 / ES114) (Vibrio fischeri).